Reading from the N-terminus, the 550-residue chain is Hydroxylamine reductase (550 aa).

The [2Fe-2S] cluster site is built by cysteine 3, cysteine 6, cysteine 18, and cysteine 25. Positions 249, 273, 317, 405, 433, 458, 492, and 494 each coordinate hybrid [4Fe-2O-2S] cluster. Cysteine 405 bears the Cysteine persulfide mark.

This sequence belongs to the HCP family. [2Fe-2S] cluster serves as cofactor. The cofactor is hybrid [4Fe-2O-2S] cluster.

The protein localises to the cytoplasm. It carries out the reaction A + NH4(+) + H2O = hydroxylamine + AH2 + H(+). Functionally, catalyzes the reduction of hydroxylamine to form NH(3) and H(2)O. The chain is Hydroxylamine reductase from Escherichia coli O6:K15:H31 (strain 536 / UPEC).